A 524-amino-acid polypeptide reads, in one-letter code: 2-isopropylmalate synthase (524 aa).

The 263-residue stretch at 12-274 folds into the Pyruvate carboxyltransferase domain; the sequence is VIIFDTTLRD…WNRIETTMLT (263 aa). Mn(2+) is bound by residues Asp21, His209, His211, and Asn245. The segment at 398–524 is regulatory domain; sequence KLMSLTVIAG…EDAPAVAVAG (127 aa).

This sequence belongs to the alpha-IPM synthase/homocitrate synthase family. LeuA type 1 subfamily. Homodimer. Mn(2+) serves as cofactor.

Its subcellular location is the cytoplasm. The enzyme catalyses 3-methyl-2-oxobutanoate + acetyl-CoA + H2O = (2S)-2-isopropylmalate + CoA + H(+). It functions in the pathway amino-acid biosynthesis; L-leucine biosynthesis; L-leucine from 3-methyl-2-oxobutanoate: step 1/4. Functionally, catalyzes the condensation of the acetyl group of acetyl-CoA with 3-methyl-2-oxobutanoate (2-ketoisovalerate) to form 3-carboxy-3-hydroxy-4-methylpentanoate (2-isopropylmalate). The chain is 2-isopropylmalate synthase from Rhodopseudomonas palustris (strain ATCC BAA-98 / CGA009).